Consider the following 408-residue polypeptide: MEVLEEDLTCPICCSLFDDPRVLPCSHNFCKKCLDGVLEENSRTMQWRPSSFKCPTCRKETPTMGVNGLQVNYLLKGIVEKYNKIKVSPKMPVCKEHSDQPLNIFCSTDLKLICGSCATTGEHKKHVFSSIGDAYIQEKSSLETLFQGVEEWNSKEVHSHLDTLESNKRKALHSLAKESDKVKAYFEKLQYLLEQKKNEILSDFETLKLAVMQAYDTEINKLHTVLSEQRKACNIVEDLKNISDPFMFLQQMQEFRDKMTFIKEAPLTTGQDVNVNPAMKEFDTSMWDSIKLGEVDKLSLPQDTTSKKEPGDAKTLHSLKPILVVACLILLLVTFLCAYPFIDSLPTFTIDLQVISSYFFTTTAKAANLTILFWEQLSEELLILKQRCQTYVSVFLENVAEFVCKYKL.

Residues cysteine 10–arginine 58 form an RING-type zinc finger. The segment at proline 89–isoleucine 131 adopts a B box-type zinc-finger fold. Residues cysteine 94, histidine 97, cysteine 117, and histidine 123 each contribute to the Zn(2+) site. The helical transmembrane segment at isoleucine 322–isoleucine 342 threads the bilayer.

The protein localises to the endoplasmic reticulum membrane. Its pathway is protein modification; protein ubiquitination. Its function is as follows. E3 ubiquitin ligase involved in the retrotranslocation and turnover of membrane and secretory proteins from the ER through a set of processes named ER-associated degradation (ERAD). This process acts on misfolded proteins as well as in the regulated degradation of correctly folded proteins. In Xenopus tropicalis (Western clawed frog), this protein is Tripartite motif containing 13 (trim13).